Consider the following 233-residue polypeptide: Phosphoribosylaminoimidazole-succinocarboxamide synthase (233 aa).

It belongs to the SAICAR synthetase family.

It catalyses the reaction 5-amino-1-(5-phospho-D-ribosyl)imidazole-4-carboxylate + L-aspartate + ATP = (2S)-2-[5-amino-1-(5-phospho-beta-D-ribosyl)imidazole-4-carboxamido]succinate + ADP + phosphate + 2 H(+). It functions in the pathway purine metabolism; IMP biosynthesis via de novo pathway; 5-amino-1-(5-phospho-D-ribosyl)imidazole-4-carboxamide from 5-amino-1-(5-phospho-D-ribosyl)imidazole-4-carboxylate: step 1/2. In Thermococcus sibiricus (strain DSM 12597 / MM 739), this protein is Phosphoribosylaminoimidazole-succinocarboxamide synthase.